Consider the following 343-residue polypeptide: 2,3,4,5-tetrahydropyridine-2,6-dicarboxylate N-succinyltransferase (343 aa).

Glutamate 204 is a Mg(2+) binding site. Catalysis depends on glutamate 220, which acts as the Acyl-anhydride intermediate. Succinyl-CoA contacts are provided by residues arginine 222, glycine 237, serine 240, alanine 263, 278 to 279, glycine 286, lysine 303, and 316 to 319; these read ES and RRNS.

The protein belongs to the type 2 tetrahydrodipicolinate N-succinyltransferase family. In terms of assembly, homotrimer.

It is found in the cytoplasm. It carries out the reaction (S)-2,3,4,5-tetrahydrodipicolinate + succinyl-CoA + H2O = (S)-2-succinylamino-6-oxoheptanedioate + CoA. It functions in the pathway amino-acid biosynthesis; L-lysine biosynthesis via DAP pathway; LL-2,6-diaminopimelate from (S)-tetrahydrodipicolinate (succinylase route): step 1/3. Its function is as follows. Catalyzes the conversion of the cyclic tetrahydrodipicolinate (THDP) into the acyclic N-succinyl-L-2-amino-6-oxopimelate using succinyl-CoA. The protein is 2,3,4,5-tetrahydropyridine-2,6-dicarboxylate N-succinyltransferase of Vibrio cholerae serotype O1 (strain ATCC 39315 / El Tor Inaba N16961).